A 545-amino-acid polypeptide reads, in one-letter code: Betaine receptor acr-23 (545 aa).

Positions 1 to 19 (MHRIYTFLIFISQLALGLS) are cleaved as a signal peptide. At 20 to 244 (NNPDIPIQYE…DVVIQRKPLY (225 aa)) the chain is on the extracellular side. N53 and N97 each carry an N-linked (GlcNAc...) asparagine glycan. Cystine bridges form between C157–C171 and C224–C225. N228 carries an N-linked (GlcNAc...) asparagine glycan. A helical membrane pass occupies residues 245 to 265 (YVLNLIAPTAVITFISIIGFF). The N-linked (GlcNAc...) asparagine glycan is linked to N276. The next 2 membrane-spanning stretches (helical) occupy residues 287-307 (EKITLGITTLLSMSIMIFMVS) and 317-337 (VPLIALFYTLMITIISVGTLA). At 338-512 (ASSVIFVQKL…WDWVAAVLER (175 aa)) the chain is on the cytoplasmic side. The chain crosses the membrane as a helical span at residues 513-533 (VFLIFFTICFLFSAIGINLYG).

Belongs to the ligand-gated ion channel (TC 1.A.9) family. Acetylcholine receptor (TC 1.A.9.1) subfamily. Expressed in the body wall muscles that are arranged into four longitudinal bundles, some mechanosensory neurons, the head muscles and multiple interneurons. Not expressed in motor neurons (at protein level).

It localises to the cell membrane. Betaine receptor that functions as a ligand-gated non-selective monovalent cation channel in mechanosensory neurons to maintain basal levels of locomotion. The channel is permeable to Na(+) and K(+) but not to Ba(2+) or Ca(2+) ions. Elicits current in response to betaine, very weak current in response to choline, virtually no current in response to acetylcholine and nicotine, and no current in response to glycine and GABA. The polypeptide is Betaine receptor acr-23 (Caenorhabditis elegans).